The sequence spans 469 residues: MNPEEAMRPLLMASEMMMFGAGLVALIAGSFLRRQRQWWVGVMAAAAQVGVIGVAVVQMVGPDQMAFEGAFSVDTATGVARIACAAGLLLIWAVAGAEMRASPREAETYALLMFSATGVLVLAGAEDLLLLVAGYFLASIPLYGLVGLARSAAAAEAAMKAYLMGALFGILLMLGVTILYGLTGATRYPQLAMTLSGAPAVAVAAGVVGVLAGLMFEAGGVPAHFWVPDAAQGANATAATFLTTVPKIGALVALYRLTTVLPDTLAWPVLIAVFAVISMTLGNLAAYWQQDPRRLLGWSTVSQVGYLLVPITVAGASELALPSLLFYLGGYTVTNIAAFAVTAALPGRRDLDSYRGLARTRPWLAAALVVALLGLVGTPPTAVFIGKVTTAAAAWDGRYAWLAVVVFVNTLVSLFYYLRWIIPAFGRPHETGDADQSAVQHWPARVAVLAAALSLLLGIIAGPVWQLVT.

14 helical membrane-spanning segments follow: residues 9–29, 40–60, 76–96, 105–125, 128–148, 162–182, 201–221, 234–254, 265–285, 294–316, 327–347, 365–385, 402–422, and 448–468; these read PLLM…LIAG, VGVM…VQMV, ATGV…AVAG, EAET…LAGA, LLLL…LVGL, YLMG…LYGL, VAVA…AGGV, ANAT…LVAL, LAWP…GNLA, RLLG…VAGA, YLGG…ALPG, AAAL…AVFI, LAVV…RWII, and VLAA…WQLV.

This sequence belongs to the complex I subunit 2 family. In terms of assembly, NDH-1 is composed of 14 different subunits. Subunits NuoA, H, J, K, L, M, N constitute the membrane sector of the complex.

Its subcellular location is the cell membrane. The catalysed reaction is a quinone + NADH + 5 H(+)(in) = a quinol + NAD(+) + 4 H(+)(out). Functionally, NDH-1 shuttles electrons from NADH, via FMN and iron-sulfur (Fe-S) centers, to quinones in the respiratory chain. The immediate electron acceptor for the enzyme in this species is believed to be a menaquinone. Couples the redox reaction to proton translocation (for every two electrons transferred, four hydrogen ions are translocated across the cytoplasmic membrane), and thus conserves the redox energy in a proton gradient. The polypeptide is NADH-quinone oxidoreductase subunit N (Mycobacterium sp. (strain JLS)).